Here is a 388-residue protein sequence, read N- to C-terminus: MDPITTASTEFCLDVFKELSSNNVGENIFFSPLTTFYALSMLLLGTRGKSAEQMEKVLHYDSFSGVLKAKTKNSSECSQVGVMHPDFRALISHINQQNSLSVANRIYGTRSISFHKQYVRCCEKLYQAKLQTVDFELSTEETRKSINAWVKNKTNGKITNLFAKGTIDPSSVMVLVSAIYFKGQWQNKFQKRETVKAPFHMGVGKSAVVNMMYQTGTFKLAIIKEPEMQVLELPYANNKLRMIILLPVGTASVSQIEKHLNVKMLREWTNPSNMVEREVDVHIPKFSLSVKYDLNTLLKSLGMRDIFNVANADLSGMSPDKGLYLSKVVHKSYVDVNEEGTEAAAATGESISVKRLPVTVQFTANCPFLFFIWDESGNILFAGKFASP.

An RCL region spans residues 338–362 (EEGTEAAAATGESISVKRLPVTVQF).

This sequence belongs to the serpin family. Ov-serpin subfamily. As to expression, expressed in eye, lung, lymphocytes, thymus, stomach, uterus, heart, brain, liver, skeletal muscle, and in day 7, 15, and 17 embryos.

It is found in the cytoplasm. Functionally, inhibitor of serine proteases. Has moderate inhibitory activity for trypsin-like peptidases, but also some activity with cysteine peptidases, cathepsin L, K, and V, and the serine peptidase, tryptase gamma. This Mus musculus (Mouse) protein is Serpin B11 (Serpinb11).